A 422-amino-acid chain; its full sequence is AP-1 complex subunit mu-1-I (422 aa).

The MHD domain maps to 167-420; that stretch reads KNEVFLDVIE…ITQNGEYEMR (254 aa).

Belongs to the adaptor complexes medium subunit family. As to quaternary structure, adaptor protein complex 1 (AP-1) is a heterotetramer composed of two large adaptins (gamma- and beta'-type subunits), a medium adaptin (mu-type subunit AP47) and a small adaptin (sigma-type subunit AP19). Interacts (via N-terminus) with kvs-4. In terms of tissue distribution, expressed in the cholinergic motor neuron DA9.

It localises to the golgi apparatus. It is found in the cytoplasmic vesicle. The protein resides in the clathrin-coated vesicle membrane. The protein localises to the cell projection. Its subcellular location is the dendrite. Functionally, component of the adaptor complexes which link clathrin to receptors in coated vesicles. Clathrin-associated protein complexes are believed to interact with the cytoplasmic tails of membrane proteins, leading to their selection and concentration. Required for many aspects of development and behavior, including negative regulation of vulval differentiation. Required for the dendritic localization of potassium channel kvs-4 in the cholinergic motor neuron DA9. This chain is AP-1 complex subunit mu-1-I (unc-101), found in Caenorhabditis elegans.